Consider the following 1044-residue polypeptide: Spindle assembly checkpoint serine/threonine-protein kinase bub1 (1044 aa).

The BUB1 N-terminal domain occupies 36-204 (FQEELDIIEE…SSPFPPPRIV (169 aa)). Disordered regions lie at residues 209-259 (PVSS…PLLY), 317-343 (VHHD…TPTR), 404-446 (ESLE…SQEE), 484-555 (KNSN…DSNS), and 685-705 (IKPK…SLDG). Residues 223–239 (QVFSDASSSRDSQNASD) are compositionally biased toward polar residues. Residues 430–442 (NSSNSGATSLTGR) show a composition bias toward polar residues. Positions 504–518 (STLQEETATGTTSTT) are enriched in low complexity. Residues 544–555 (RSPQYSTVDSNS) show a composition bias toward polar residues. Residue Thr-550 is modified to Phosphothreonine. Positions 718–1044 (LSVISKLGQG…LLKSIEKRKI (327 aa)) constitute a Protein kinase domain. The ATP site is built by Ala-728, Phe-729, Ala-730, Lys-762, and Asp-809. The active-site Proton acceptor is Asp-861. Residues Asp-865, Asn-866, and Asp-900 each contribute to the ATP site.

Belongs to the protein kinase superfamily. Ser/Thr protein kinase family. BUB1 subfamily. As to quaternary structure, part of the BUB1-BUB3 complex, composed of bub1 and bub3. Interacts with spc7 (when phosphorylated on MELT motifs); to recruit the bub1-bub3 complex to kinetochores. Interacts with mad3. Post-translationally, autophosphorylated.

Its subcellular location is the nucleus. It localises to the chromosome. The protein localises to the centromere. It is found in the kinetochore. The enzyme catalyses L-seryl-[protein] + ATP = O-phospho-L-seryl-[protein] + ADP + H(+). It catalyses the reaction L-threonyl-[protein] + ATP = O-phospho-L-threonyl-[protein] + ADP + H(+). Involved in mitotic spindle assembly checkpoint signaling, a process that delays anaphase until chromosomes are bioriented on the spindle, and in the repair of incorrect mitotic kinetochore-spindle microtubule attachments. Acts as a kinetochore scaffold for the recruitment of other spindle assembly checkpoint components. This Schizosaccharomyces pombe (strain 972 / ATCC 24843) (Fission yeast) protein is Spindle assembly checkpoint serine/threonine-protein kinase bub1.